A 2845-amino-acid chain; its full sequence is Multiple epidermal growth factor-like domains protein 8 (2845 aa).

Residues 1–27 (MALGKVLAMALVLALAVLGSLSPGARA) form the signal peptide. Over 28 to 2647 (GDCKGQRQVL…FFRQDQAHID (2620 aa)) the chain is Extracellular. Intrachain disulfides connect Cys-30-Cys-57, Cys-142-Cys-152, Cys-146-Cys-158, Cys-174-Cys-184, Cys-178-Cys-191, and Cys-193-Cys-202. The 111-residue stretch at 30-140 (CKGQRQVLRE…LGFNASFRFS (111 aa)) folds into the CUB 1 domain. The N-linked (GlcNAc...) asparagine glycan is linked to Asn-50. EGF-like domains follow at residues 138–168 (RFSL…GGPD) and 170–203 (GLQE…RACD). The N-linked (GlcNAc...) asparagine glycan is linked to Asn-217. 6 Kelch repeats span residues 241-287 (LLAV…AVAW), 290-338 (SLVL…AGHA), 346-399 (WLYV…FHAP), 402-453 (ALLV…FHTA), 459-511 (YMVV…APPS), and 525-575 (VLLV…SRDP). PSI domains are found at residues 561 to 613 (YCSM…GDCQ), 847 to 899 (SCTS…TLCP), and 900 to 947 (LCEE…EECP). Residue Asn-1048 is glycosylated (N-linked (GlcNAc...) asparagine). The EGF-like 3; calcium-binding domain occupies 1074-1115 (DVDECRLGLARCHPRATCLNTPLSYECHCQRGYQGDGISHCN). 16 disulfide bridges follow: Cys-1078–Cys-1091, Cys-1085–Cys-1100, Cys-1102–Cys-1114, Cys-1163–Cys-1171, Cys-1165–Cys-1179, Cys-1182–Cys-1191, Cys-1194–Cys-1208, Cys-1211–Cys-1224, Cys-1213–Cys-1231, Cys-1233–Cys-1242, Cys-1245–Cys-1259, Cys-1263–Cys-1302, Cys-1336–Cys-1367, Cys-1407–Cys-1421, Cys-1415–Cys-1433, and Cys-1435–Cys-1444. Laminin EGF-like domains are found at residues 1163–1210 (CGCS…GCRP) and 1211–1261 (CQCN…SCFR). Residues 1263-1405 (CGGRALLTNV…WGFNASVGSA (143 aa)) enclose the CUB 2 domain. The N-linked (GlcNAc...) asparagine glycan is linked to Asn-1271. Thr-1353 is subject to Phosphothreonine. The region spanning 1403 to 1445 (GSARCGSGGPGSCPVPQECVPQDGAAGAGLCRCPQGWAGPHCR) is the EGF-like 4 domain. Kelch repeat units follow at residues 1522-1570 (TLWM…SFHA), 1580-1626 (AMYL…HTLT), 1632-1679 (SLLL…SAVY), 1685-1735 (SLYV…VRGS), 1796-1843 (TMVV…ESVA), and 1852-1898 (RLYI…CHGA). Positions 1726 to 1745 (RDRMRNVRGSSRGLGQVPGE) are disordered. PSI domains follow at residues 1876 to 1916 (PCRL…SPCS), 1924 to 1979 (ECRR…NDCR), 2060 to 2118 (PCHL…ESCS), and 2120 to 2177 (GCAQ…LSCP). Residue Asn-2066 is glycosylated (N-linked (GlcNAc...) asparagine). The EGF-like 5 domain occupies 2178 to 2216 (PEDECANGHHDCNETQNCHDQPHGYECSCKTGYTMDNMT). Disulfide bonds link Cys-2182–Cys-2195 and Cys-2189–Cys-2204. Asn-2229 carries N-linked (GlcNAc...) asparagine glycosylation. Disulfide bonds link Cys-2253–Cys-2261, Cys-2255–Cys-2270, Cys-2273–Cys-2282, Cys-2285–Cys-2299, Cys-2380–Cys-2389, Cys-2382–Cys-2397, Cys-2399–Cys-2424, and Cys-2427–Cys-2441. 2 Laminin EGF-like domains span residues 2253-2301 (CRCN…TCRP) and 2380-2443 (CQCN…QCYR). Residues 2523–2564 (TVHIQPPPAPPPPPPPADGGPRGAGDPGGAGASSGPGAPAEP) are disordered. The segment covering 2527 to 2540 (QPPPAPPPPPPPAD) has biased composition (pro residues). The span at 2542 to 2556 (GPRGAGDPGGAGASS) shows a compositional bias: gly residues. The helical transmembrane segment at 2648–2668 (LFVFFSVFFSCFFLFLSLCVL) threads the bilayer. At 2669 to 2845 (LWKAKQALDQ…SQDNLTSMSL (177 aa)) the chain is on the cytoplasmic side. The span at 2817 to 2831 (GGGAGGSGHGTGAGR) shows a compositional bias: gly residues. Residues 2817–2845 (GGGAGGSGHGTGAGRKGLLSQDNLTSMSL) form a disordered region. Polar residues predominate over residues 2836-2845 (SQDNLTSMSL).

Its subcellular location is the membrane. Its function is as follows. Acts as a negative regulator of hedgehog signaling. The polypeptide is Multiple epidermal growth factor-like domains protein 8 (MEGF8) (Homo sapiens (Human)).